Here is a 322-residue protein sequence, read N- to C-terminus: Light-dependent protochlorophyllide reductase (322 aa).

This sequence belongs to the short-chain dehydrogenases/reductases (SDR) family. POR subfamily.

It carries out the reaction chlorophyllide a + NADP(+) = protochlorophyllide a + NADPH + H(+). Its pathway is porphyrin-containing compound metabolism; chlorophyll biosynthesis. Functionally, phototransformation of protochlorophyllide (Pchlide) to chlorophyllide (Chlide). The polypeptide is Light-dependent protochlorophyllide reductase (por) (Synechocystis sp. (strain ATCC 27184 / PCC 6803 / Kazusa)).